The following is a 289-amino-acid chain: ATP synthase gamma chain (289 aa).

It belongs to the ATPase gamma chain family. As to quaternary structure, F-type ATPases have 2 components, CF(1) - the catalytic core - and CF(0) - the membrane proton channel. CF(1) has five subunits: alpha(3), beta(3), gamma(1), delta(1), epsilon(1). CF(0) has three main subunits: a, b and c.

The protein resides in the cell inner membrane. Produces ATP from ADP in the presence of a proton gradient across the membrane. The gamma chain is believed to be important in regulating ATPase activity and the flow of protons through the CF(0) complex. The chain is ATP synthase gamma chain from Aromatoleum aromaticum (strain DSM 19018 / LMG 30748 / EbN1) (Azoarcus sp. (strain EbN1)).